We begin with the raw amino-acid sequence, 95 residues long: Small ribosomal subunit protein uS19 (95 aa).

Positions 73-95 (EFSPTRTYRGHGADKNAKGSKKK) are disordered.

The protein belongs to the universal ribosomal protein uS19 family.

Protein S19 forms a complex with S13 that binds strongly to the 16S ribosomal RNA. This chain is Small ribosomal subunit protein uS19, found in Deinococcus geothermalis (strain DSM 11300 / CIP 105573 / AG-3a).